The chain runs to 91 residues: Large ribosomal subunit protein bL27 (91 aa).

Positions 1–22 (MAHKKGQGSSRNGRDSNPQYRG) are disordered. Positions 7 to 19 (QGSSRNGRDSNPQ) are enriched in polar residues.

Belongs to the bacterial ribosomal protein bL27 family.

The protein is Large ribosomal subunit protein bL27 of Myxococcus xanthus (strain DK1622).